Here is a 426-residue protein sequence, read N- to C-terminus: MRILVIGSGGREHAILKGLAADPATTDLHVAPGSPAFASLATVHADYKEVADPARMLELAQDIKPELVVIGPEIPLVAGVADTLRAEGIAVFGPNADAAQIEGSKAFAKEVMEAAGVATARAQTLPPGMTDDDIEHELDYFGPMYVVKDDGLAAGKGVVVTADRAEARQHIHLVHAAGNPVLLESFLDGPEVSLFCLVDGETVVPLLPAQDHKRAYDNDEGPNTGGMGAYTPLPWLSAEGVDRIVREVCEPVAKQMVERGTPYSGLLYAGLAWGQEGPSVIEFNCRFGDPETQPLLSLLKTPLAGVLNAVATGTLDELPALEWEDAYAVTVVLAAANYPESPRKGDAITSPDLADTDKILHAGTAVKDAEVISNGGRVLNVIGKGETLSAARAAAYEVLENIELADSFYRTDIGQAAEEGRISIDS.

One can recognise an ATP-grasp domain in the interval 109-312 (KEVMEAAGVA…LAGVLNAVAT (204 aa)). 138–193 (LDYFGPMYVVKDDGLAAGKGVVVTADRAEARQHIHLVHAAGNPVLLESFLDGPEVS) is a binding site for ATP. Mg(2+) is bound by residues Glu282 and Asn284.

It belongs to the GARS family. Mg(2+) is required as a cofactor. Mn(2+) serves as cofactor.

It catalyses the reaction 5-phospho-beta-D-ribosylamine + glycine + ATP = N(1)-(5-phospho-beta-D-ribosyl)glycinamide + ADP + phosphate + H(+). It participates in purine metabolism; IMP biosynthesis via de novo pathway; N(1)-(5-phospho-D-ribosyl)glycinamide from 5-phospho-alpha-D-ribose 1-diphosphate: step 2/2. The chain is Phosphoribosylamine--glycine ligase from Corynebacterium ammoniagenes (Brevibacterium ammoniagenes).